Reading from the N-terminus, the 441-residue chain is MSAVDDQQNADKQVEQWKIKKLIKNLEAARGNGTSMISLIIRPGDQIAKVNKMLAEEYGTASNIKSRVNRLSVLGAITSAQQRLKLYTKVPDNGLVIYCGTMVTDEGKEKPVRIDIEPFKPINTSLYLCDNKFHTAPLGELLESDEKFGFIVVDGNGALFGLLCGSTRTVLHKITVDLPKKHGRGGQSALRFARLRMEKRHNYVRKVSELATQFYVTNDKPNVSGLILAGSADFKTELGTSDMFDQRLREKIIKIVDVSYGGDNGFNQAIELSGEVLSSVKFIQEKKLISQFFEEIAQDTGKYCFGIADTLKALDLGAAHTLIVWESLETIRYLLRLPTGEEKVIFLNKDQNKDASVFKDKESGLDYEIVEEMPIVEWFANNYKNFGASLEFVTNKSQEGSQFCKGFGGLGGLLRYQVDFAQLNDFDNPDENEYDDSDSDF.

This sequence belongs to the eukaryotic release factor 1 family. In terms of assembly, heterodimer of two subunits, one of which binds GTP.

It is found in the cytoplasm. Directs the termination of nascent peptide synthesis (translation) in response to the termination codons UAA, UAG and UGA. The sequence is that of Eukaryotic peptide chain release factor subunit 1 (erf1) from Dictyostelium discoideum (Social amoeba).